A 343-amino-acid chain; its full sequence is Ribosomal RNA small subunit methyltransferase C (343 aa).

It belongs to the methyltransferase superfamily. RsmC family. In terms of assembly, monomer.

The protein resides in the cytoplasm. The catalysed reaction is guanosine(1207) in 16S rRNA + S-adenosyl-L-methionine = N(2)-methylguanosine(1207) in 16S rRNA + S-adenosyl-L-homocysteine + H(+). In terms of biological role, specifically methylates the guanine in position 1207 of 16S rRNA in the 30S particle. This is Ribosomal RNA small subunit methyltransferase C from Shewanella sediminis (strain HAW-EB3).